Consider the following 107-residue polypeptide: NADH dehydrogenase [ubiquinone] 1 beta subcomplex subunit 10-A (107 aa).

Positions 1–23 (MGRKKGLPEFEESAPDGFDPENP) are disordered.

It belongs to the complex I NDUFB10 subunit family. Complex I is composed of at least 49 different subunits.

Its subcellular location is the mitochondrion inner membrane. Functionally, accessory subunit of the mitochondrial membrane respiratory chain NADH dehydrogenase (Complex I), that is believed not to be involved in catalysis. Complex I functions in the transfer of electrons from NADH to the respiratory chain. The immediate electron acceptor for the enzyme is believed to be ubiquinone. The protein is NADH dehydrogenase [ubiquinone] 1 beta subcomplex subunit 10-A of Arabidopsis thaliana (Mouse-ear cress).